A 145-amino-acid polypeptide reads, in one-letter code: Large ribosomal subunit protein uL11 (145 aa).

This sequence belongs to the universal ribosomal protein uL11 family. In terms of assembly, part of the ribosomal stalk of the 50S ribosomal subunit. Interacts with L10 and the large rRNA to form the base of the stalk. L10 forms an elongated spine to which L12 dimers bind in a sequential fashion forming a multimeric L10(L12)X complex. Post-translationally, one or more lysine residues are methylated.

In terms of biological role, forms part of the ribosomal stalk which helps the ribosome interact with GTP-bound translation factors. The polypeptide is Large ribosomal subunit protein uL11 (Flavobacterium johnsoniae (strain ATCC 17061 / DSM 2064 / JCM 8514 / BCRC 14874 / CCUG 350202 / NBRC 14942 / NCIMB 11054 / UW101) (Cytophaga johnsonae)).